The following is a 326-amino-acid chain: 3-dehydrosphinganine reductase TSC10A (326 aa).

Topologically, residues 1-7 (MAAISPL) are lumenal. Residues 8 to 28 (FLLFLIPIIPLSLLAILALIV) traverse the membrane as a helical segment. Residues 29 to 264 (RPRPIKIPIK…KAMDGIKAGN (236 aa)) are Cytoplasmic-facing. The NADPH site is built by Gly46, Ser48, Ser49, Gly50, Arg71, Lys75, and Asp97. A GXSXG motif is present at residues 46-50 (GGSSG). Ser174 functions as the Proton donor in the catalytic mechanism. The active-site Proton acceptor is the Tyr188. The NADP(+) site is built by Tyr188 and Lys192. Lys192 (lowers pKa of active site Tyr) is an active-site residue. Residues 265-285 (FTVSCNFEGFLLSLATTGMSP) traverse the membrane as a helical segment. The Lumenal segment spans residues 286-288 (QRS). A helical membrane pass occupies residues 289–309 (FWLAFLEVITAGPIRLIALFF). Residues 310–326 (QWDWYKAIEKWSKTKTK) lie on the Cytoplasmic side of the membrane.

It belongs to the short-chain dehydrogenases/reductases (SDR) family. Expressed in roots, leaves, stems, flowers and siliques.

Its subcellular location is the endoplasmic reticulum membrane. It catalyses the reaction sphinganine + NADP(+) = 3-oxosphinganine + NADPH + H(+). It functions in the pathway lipid metabolism; sphingolipid metabolism. In terms of biological role, catalyzes the reduction of 3'-oxosphinganine (3-ketodihydrosphingosine/KDS) to sphinganine (dihydrosphingosine/DHS), the second step of de novo sphingolipid biosynthesis. In plants, sphingolipids seems to play a critical role in mineral ion homeostasis, most likely through their involvement in the ion transport functionalities of membrane systems in the root. Lacks stereospecificity and can also produce L-threo-DHS in addition to D-erythro-DHS. The protein is 3-dehydrosphinganine reductase TSC10A (TSC10A) of Arabidopsis thaliana (Mouse-ear cress).